The sequence spans 142 residues: Coactosin-like protein (142 aa).

At Ala2 the chain carries N-acetylalanine. Positions 2-130 (ATKIDKEACR…EEDFIKSELK (129 aa)) constitute an ADF-H domain. Positions 66–75 (TGDAMSKRSK) are flexible and important for F-actin binding. Residues Lys102 and Lys126 each carry the N6-acetyllysine modification.

The protein belongs to the actin-binding proteins ADF family. Coactosin subfamily. In terms of assembly, interacts with 5-lipoxygenase (ALOX5/5LO) in a calcium-independent manner. Binds to F-actin with a stoichiometry of 1:2. In terms of tissue distribution, widely expressed with highest levels in placenta, lung, kidney and peripheral blood leukocytes and lower levels in brain, liver and pancreas.

The protein resides in the cytoplasm. It is found in the cytoskeleton. The protein localises to the nucleus. Binds to F-actin in a calcium-independent manner. Has no direct effect on actin depolymerization. Acts as a chaperone for ALOX5 (5LO), influencing both its stability and activity in leukotrienes synthesis. This is Coactosin-like protein (COTL1) from Homo sapiens (Human).